The chain runs to 89 residues: Large ribosomal subunit protein bL27 (89 aa).

Residues 1–21 (MAHKKAGGSSRNGRDSKGKRL) are disordered.

Belongs to the bacterial ribosomal protein bL27 family.

In Bradyrhizobium diazoefficiens (strain JCM 10833 / BCRC 13528 / IAM 13628 / NBRC 14792 / USDA 110), this protein is Large ribosomal subunit protein bL27.